We begin with the raw amino-acid sequence, 96 residues long: Small, acid-soluble spore protein gamma-type (96 aa).

The segment covering 1–15 (MNTKNFTPQESRTNA) has biased composition (polar residues). Positions 1–96 (MNTKNFTPQE…SEAKKRNNQQ (96 aa)) are disordered. A compositionally biased stretch (low complexity) spans 16 to 27 (QQVRQQNQQSAQ). The segment covering 28–41 (GTSSGFATEFASET) has biased composition (polar residues). 2 repeats span residues 28–52 (GTSS…QNQQ) and 61–87 (GATA…NQQS). Composition is skewed to low complexity over residues 42–57 (NAQQ…AQAN) and 76–86 (NVQQVRQQNQQ).

It belongs to the gamma-type SASP family.

Its function is as follows. SASP are proteins degraded in the first minutes of spore germination and provide amino acids for both new protein synthesis and metabolism. These proteins may be involved in dormant spore's high resistance to UV light. The chain is Small, acid-soluble spore protein gamma-type from Laceyella sacchari (Thermoactinomyces thalpophilus).